The primary structure comprises 344 residues: GTPase Obg (344 aa).

The Obg domain occupies 1-159 (MKFLDLCKVY…RTLWLRLKLI (159 aa)). The interval 126–146 (GNLHFKSSTNQAPRRSNPGQD) is disordered. Residues 130-144 (FKSSTNQAPRRSNPG) show a composition bias toward polar residues. An OBG-type G domain is found at 160–327 (ADVGLLGLPN…VLRKLRGEIS (168 aa)). GTP-binding positions include 166–173 (GLPNAGKS), 191–195 (FTTLH), 212–215 (DIPG), 279–282 (NKID), and 308–310 (SGV). Mg(2+) contacts are provided by S173 and T193.

Belongs to the TRAFAC class OBG-HflX-like GTPase superfamily. OBG GTPase family. Monomer. Mg(2+) is required as a cofactor.

Its subcellular location is the cytoplasm. Its function is as follows. An essential GTPase which binds GTP, GDP and possibly (p)ppGpp with moderate affinity, with high nucleotide exchange rates and a fairly low GTP hydrolysis rate. Plays a role in control of the cell cycle, stress response, ribosome biogenesis and in those bacteria that undergo differentiation, in morphogenesis control. This Roseobacter denitrificans (strain ATCC 33942 / OCh 114) (Erythrobacter sp. (strain OCh 114)) protein is GTPase Obg.